The following is a 372-amino-acid chain: GDP-mannose 4,6-dehydratase (372 aa).

NADP(+)-binding positions include G9–D14, D64–L65, L86–S90, and Y101. T133 is an active-site residue. Residues E135 and Y157 each act as nucleophile in the active site. NADP(+) is bound by residues K161, H187, and R192.

This sequence belongs to the NAD(P)-dependent epimerase/dehydratase family. GDP-mannose 4,6-dehydratase subfamily. It depends on NADP(+) as a cofactor.

The enzyme catalyses GDP-alpha-D-mannose = GDP-4-dehydro-alpha-D-rhamnose + H2O. It participates in nucleotide-sugar biosynthesis; GDP-L-fucose biosynthesis via de novo pathway; GDP-L-fucose from GDP-alpha-D-mannose: step 1/2. Its function is as follows. Catalyzes the conversion of GDP-D-mannose to GDP-4-dehydro-6-deoxy-D-mannose. This is GDP-mannose 4,6-dehydratase from Vibrio cholerae.